Here is a 106-residue protein sequence, read N- to C-terminus: Nucleoid-associated protein MCCL_1934 (106 aa).

Positions 1–34 are disordered; sequence MRGGGNMQQMMKQMQKMQKKMAEEQEKLKEERIE. Residues 7 to 16 show a composition bias toward low complexity; sequence MQQMMKQMQK. The span at 20–34 shows a compositional bias: basic and acidic residues; that stretch reads KMAEEQEKLKEERIE.

The protein belongs to the YbaB/EbfC family. In terms of assembly, homodimer.

It is found in the cytoplasm. The protein localises to the nucleoid. Binds to DNA and alters its conformation. May be involved in regulation of gene expression, nucleoid organization and DNA protection. This chain is Nucleoid-associated protein MCCL_1934, found in Macrococcus caseolyticus (strain JCSC5402) (Macrococcoides caseolyticum).